The primary structure comprises 67 residues: ATP synthase F(0) complex subunit 8 (67 aa).

Residues 8 to 24 (TWFTTIVAMILSLFILM) form a helical membrane-spanning segment. The residue at position 54 (Lys-54) is an N6-acetyllysine; alternate. An N6-succinyllysine; alternate modification is found at Lys-54. An N6-acetyllysine modification is found at Lys-57.

It belongs to the ATPase protein 8 family. Component of the ATP synthase complex composed at least of ATP5F1A/subunit alpha, ATP5F1B/subunit beta, ATP5MC1/subunit c (homooctomer), MT-ATP6/subunit a, MT-ATP8/subunit 8, ATP5ME/subunit e, ATP5MF/subunit f, ATP5MG/subunit g, ATP5MK/subunit k, ATP5MJ/subunit j, ATP5F1C/subunit gamma, ATP5F1D/subunit delta, ATP5F1E/subunit epsilon, ATP5PF/subunit F6, ATP5PB/subunit b, ATP5PD/subunit d, ATP5PO/subunit OSCP. ATP synthase complex consists of a soluble F(1) head domain (subunits alpha(3) and beta(3)) - the catalytic core - and a membrane F(0) domain - the membrane proton channel (subunits c, a, 8, e, f, g, k and j). These two domains are linked by a central stalk (subunits gamma, delta, and epsilon) rotating inside the F1 region and a stationary peripheral stalk (subunits F6, b, d, and OSCP). Interacts with PRICKLE3.

Its subcellular location is the mitochondrion membrane. In terms of biological role, subunit 8, of the mitochondrial membrane ATP synthase complex (F(1)F(0) ATP synthase or Complex V) that produces ATP from ADP in the presence of a proton gradient across the membrane which is generated by electron transport complexes of the respiratory chain. ATP synthase complex consist of a soluble F(1) head domain - the catalytic core - and a membrane F(1) domain - the membrane proton channel. These two domains are linked by a central stalk rotating inside the F(1) region and a stationary peripheral stalk. During catalysis, ATP synthesis in the catalytic domain of F(1) is coupled via a rotary mechanism of the central stalk subunits to proton translocation. In vivo, can only synthesize ATP although its ATP hydrolase activity can be activated artificially in vitro. Part of the complex F(0) domain. This Oryctolagus cuniculus (Rabbit) protein is ATP synthase F(0) complex subunit 8.